Here is a 293-residue protein sequence, read N- to C-terminus: Ribonuclease P/MRP protein subunit RPP1 (293 aa).

Belongs to the eukaryotic/archaeal RNase P protein component 3 family. Component of nuclear RNase P and RNase MRP complexes. RNase P consists of an RNA moiety and at least 9 protein subunits including POP1, POP3, POP4, POP5, POP6, POP7, POP8, RPP1 and RPR2. RNase MRP complex consists of an RNA moiety and at least 10 protein subunits including POP1, POP3, POP4, POP5, POP6, POP7, POP8, RMP1, RPP1 and SNM1, many of which are shared with the RNase P complex.

It localises to the nucleus. The catalysed reaction is Endonucleolytic cleavage of RNA, removing 5'-extranucleotides from tRNA precursor.. Its function is as follows. Component of ribonuclease P, a protein complex that generates mature tRNA molecules by cleaving their 5'-ends. Also a component of RNase MRP, which cleaves pre-rRNA sequences. This Saccharomyces cerevisiae (strain ATCC 204508 / S288c) (Baker's yeast) protein is Ribonuclease P/MRP protein subunit RPP1 (RPP1).